The sequence spans 161 residues: Phosphopantetheine adenylyltransferase (161 aa).

Position 10 (Thr-10) interacts with substrate. ATP is bound by residues 10–11 (TF) and His-18. Residues Lys-42, Leu-74, and Arg-88 each contribute to the substrate site. Residues 89-91 (GLR), Glu-99, and 124-130 (NSFISST) each bind ATP.

Belongs to the bacterial CoaD family. As to quaternary structure, homohexamer. Mg(2+) is required as a cofactor.

It localises to the cytoplasm. It carries out the reaction (R)-4'-phosphopantetheine + ATP + H(+) = 3'-dephospho-CoA + diphosphate. It functions in the pathway cofactor biosynthesis; coenzyme A biosynthesis; CoA from (R)-pantothenate: step 4/5. Functionally, reversibly transfers an adenylyl group from ATP to 4'-phosphopantetheine, yielding dephospho-CoA (dPCoA) and pyrophosphate. This is Phosphopantetheine adenylyltransferase from Photobacterium profundum (strain SS9).